A 512-amino-acid polypeptide reads, in one-letter code: Histidine ammonia-lyase (512 aa).

The segment at residues 141–143 (ASG) is a cross-link (5-imidazolinone (Ala-Gly)). Serine 142 is modified (2,3-didehydroalanine (Ser)).

The protein belongs to the PAL/histidase family. Contains an active site 4-methylidene-imidazol-5-one (MIO), which is formed autocatalytically by cyclization and dehydration of residues Ala-Ser-Gly.

The protein localises to the cytoplasm. It carries out the reaction L-histidine = trans-urocanate + NH4(+). The protein operates within amino-acid degradation; L-histidine degradation into L-glutamate; N-formimidoyl-L-glutamate from L-histidine: step 1/3. The sequence is that of Histidine ammonia-lyase from Bacillus velezensis (strain DSM 23117 / BGSC 10A6 / LMG 26770 / FZB42) (Bacillus amyloliquefaciens subsp. plantarum).